Consider the following 415-residue polypeptide: Histidine--tRNA ligase (415 aa).

Belongs to the class-II aminoacyl-tRNA synthetase family. As to quaternary structure, homodimer.

It localises to the cytoplasm. It carries out the reaction tRNA(His) + L-histidine + ATP = L-histidyl-tRNA(His) + AMP + diphosphate + H(+). The chain is Histidine--tRNA ligase from Gluconacetobacter diazotrophicus (strain ATCC 49037 / DSM 5601 / CCUG 37298 / CIP 103539 / LMG 7603 / PAl5).